The following is a 131-amino-acid chain: MRHYEIVFMVHPDQSEQVPGMIERYTGVITEANGTIHRLEDWGRRQLAYPIQDLHKAHYVLMNVEAPAETIEELETAFRFNDAVLRNMVMRTKVAVTEASPMARARDERDSRRGPAGERSYDEAHAEEIGE.

The disordered stretch occupies residues 98–131; that stretch reads EASPMARARDERDSRRGPAGERSYDEAHAEEIGE. Positions 104 to 131 are enriched in basic and acidic residues; the sequence is RARDERDSRRGPAGERSYDEAHAEEIGE.

The protein belongs to the bacterial ribosomal protein bS6 family.

In terms of biological role, binds together with bS18 to 16S ribosomal RNA. The polypeptide is Small ribosomal subunit protein bS6 (Shewanella putrefaciens (strain CN-32 / ATCC BAA-453)).